We begin with the raw amino-acid sequence, 450 residues long: MKLQINSSWQERFLADPPREKDHRPPFRRDRGRILHSAAFRCLQAKTQIHAIGENDFYRTRLTHSLEVAQIGSSIVAQMKLIDSFISLAQQLKEDRAELQKQLKLILPSNDLIESLCFAHDIGHPPFGHGGEVALNYMMRHHGGFEGNAQTFRLLTKLEPYTPNAGMNLTRRTLLGVVKYPTILDRSSPQYHQGVIVDNVDSKYVKISAWKPGKGIFRDDLKMFEWLLEPLSENDRTLFGQYKKERTRPDEVLKTRYKSLDCSIMELADDIAYAVHDLEDAIVVGVVTFQQWQSAVEKLTECRSEWIVENVQSLSQKLFSELHYERKNAIGALVNYFITHVRWKINNGFSEPLLRYNAELPDEVIEVLTIFKHFVWEYVIKHVDTQRVEYKGQRMLTEMFQIFDSDPLRLLPRNTAMRWQKATETDRKRIICDYIAGMSDAYALRVYQQL.

Positions 61–274 (RLTHSLEVAQ…MELADDIAYA (214 aa)) constitute an HD domain.

The protein belongs to the dGTPase family. Type 2 subfamily.

The protein is Deoxyguanosinetriphosphate triphosphohydrolase-like protein of Histophilus somni (strain 2336) (Haemophilus somnus).